Reading from the N-terminus, the 461-residue chain is ATP synthase subunit beta 2 (461 aa).

Position 151–158 (151–158 (GGAGVGKT)) interacts with ATP.

Belongs to the ATPase alpha/beta chains family. As to quaternary structure, F-type ATPases have 2 components, CF(1) - the catalytic core - and CF(0) - the membrane proton channel. CF(1) has five subunits: alpha(3), beta(3), gamma(1), delta(1), epsilon(1). CF(0) has three main subunits: a(1), b(2) and c(9-12). The alpha and beta chains form an alternating ring which encloses part of the gamma chain. CF(1) is attached to CF(0) by a central stalk formed by the gamma and epsilon chains, while a peripheral stalk is formed by the delta and b chains.

It is found in the cell inner membrane. It carries out the reaction ATP + H2O + 4 H(+)(in) = ADP + phosphate + 5 H(+)(out). Its function is as follows. Produces ATP from ADP in the presence of a proton gradient across the membrane. The catalytic sites are hosted primarily by the beta subunits. The polypeptide is ATP synthase subunit beta 2 (Photobacterium profundum (strain SS9)).